Here is a 739-residue protein sequence, read N- to C-terminus: Phosphoribosylformylglycinamidine synthase subunit PurL (739 aa).

The active site involves H53. 2 residues coordinate ATP: Y56 and K95. E97 serves as a coordination point for Mg(2+). Residues 98 to 101 (SHNH) and R120 each bind substrate. The Proton acceptor role is filled by H99. D121 provides a ligand contact to Mg(2+). Q244 provides a ligand contact to substrate. Mg(2+) is bound at residue D274. Residue 318 to 320 (ESQ) coordinates substrate. Positions 501 and 538 each coordinate ATP. A Mg(2+)-binding site is contributed by N539. Residue S541 coordinates substrate.

It belongs to the FGAMS family. In terms of assembly, monomer. Part of the FGAM synthase complex composed of 1 PurL, 1 PurQ and 2 PurS subunits.

The protein localises to the cytoplasm. It catalyses the reaction N(2)-formyl-N(1)-(5-phospho-beta-D-ribosyl)glycinamide + L-glutamine + ATP + H2O = 2-formamido-N(1)-(5-O-phospho-beta-D-ribosyl)acetamidine + L-glutamate + ADP + phosphate + H(+). It functions in the pathway purine metabolism; IMP biosynthesis via de novo pathway; 5-amino-1-(5-phospho-D-ribosyl)imidazole from N(2)-formyl-N(1)-(5-phospho-D-ribosyl)glycinamide: step 1/2. Functionally, part of the phosphoribosylformylglycinamidine synthase complex involved in the purines biosynthetic pathway. Catalyzes the ATP-dependent conversion of formylglycinamide ribonucleotide (FGAR) and glutamine to yield formylglycinamidine ribonucleotide (FGAM) and glutamate. The FGAM synthase complex is composed of three subunits. PurQ produces an ammonia molecule by converting glutamine to glutamate. PurL transfers the ammonia molecule to FGAR to form FGAM in an ATP-dependent manner. PurS interacts with PurQ and PurL and is thought to assist in the transfer of the ammonia molecule from PurQ to PurL. The chain is Phosphoribosylformylglycinamidine synthase subunit PurL from Listeria monocytogenes serotype 4b (strain F2365).